We begin with the raw amino-acid sequence, 334 residues long: 6-phosphogluconolactonase (334 aa).

It belongs to the cycloisomerase 2 family.

It carries out the reaction 6-phospho-D-glucono-1,5-lactone + H2O = 6-phospho-D-gluconate + H(+). It participates in carbohydrate degradation; pentose phosphate pathway; D-ribulose 5-phosphate from D-glucose 6-phosphate (oxidative stage): step 2/3. Catalyzes the hydrolysis of 6-phosphogluconolactone to 6-phosphogluconate. The chain is 6-phosphogluconolactonase from Yersinia pseudotuberculosis serotype IB (strain PB1/+).